We begin with the raw amino-acid sequence, 501 residues long: uncharacterized protein (501 aa).

2 disordered regions span residues 179–404 and 480–501; these read EKTS…DETA and SDDTDDTDDTNNSCSSEVDDSD. Residues 191-200 show a composition bias toward basic and acidic residues; that stretch reads SRNESQDKSR. Positions 201 to 214 are enriched in basic residues; the sequence is DKSRKKVCNTHKNK. Residues 215-226 are compositionally biased toward basic and acidic residues; it reads KTLDNVKPDKNI. A compositionally biased stretch (low complexity) spans 231-274; that stretch reads SSNKFTTNKPKSNKNSSDSDGSTKTTKSTRSTKSTKSSKSQKST. Over residues 304–316 the composition is skewed to basic and acidic residues; that stretch reads NPKESINHKKNDS. Positions 333–352 are enriched in polar residues; sequence DSTNCRKSNRTTTRDVTNSD. The segment covering 379–403 has biased composition (acidic residues); it reads EQSDLTEDETEENVSEEDETEEDET.

This is an uncharacterized protein from Acanthamoeba polyphaga mimivirus (APMV).